Reading from the N-terminus, the 808-residue chain is Glutamate receptor 1.1 (808 aa).

The signal sequence occupies residues 1 to 19 (MEILFSISILALLFSGVVA). Over 20 to 541 (APSDDDVFEE…MWTFFDPFEK (522 aa)) the chain is Extracellular. Asn288, Asn339, and Asn504 each carry an N-linked (GlcNAc...) asparagine glycan. The helical transmembrane segment at 542 to 562 (SLWLASGAFFVLTGIVVWLVE) threads the bilayer. Residues 563–570 (RSVNPEFQ) lie on the Cytoplasmic side of the membrane. The chain crosses the membrane as a helical span at residues 571-591 (GSWGQQLSMMLWFGFSTIVFA). Over 592 to 602 (HREKLQKMSSR) the chain is Cytoplasmic. Residues 603-623 (FLVIVWVFVVLILTSSYSANL) traverse the membrane as a helical segment. The Extracellular portion of the chain corresponds to 624–771 (TSTKTISRMQ…SKRFTFRELR (148 aa)). Residues 772–792 (GLFIIAGAAHVLVLALHLFHT) traverse the membrane as a helical segment. The Cytoplasmic portion of the chain corresponds to 793–808 (RQEVSRLCTKLQSFYK).

This sequence belongs to the glutamate-gated ion channel (TC 1.A.10.1) family. In terms of assembly, may form heteromers. Expressed predominantly in roots. First detected in the root-shoot junction, and later in lateral roots and at the margin of matures leaves.

The protein resides in the membrane. Its function is as follows. Glutamate-gated receptor that probably acts as a non-selective cation channel. Can transport sodium, potassium, and calcium ions. Functions as a carbon and nitrogen regulator and/or sensor that regulates carbon and nitrogen metabolism and distinct physiological process such as germination through the control of acid abscisic (ABA) biosynthesis. May be involved in light-signal transduction and calcium homeostasis via the regulation of calcium influx into cells. Seems required for the regulation of the abscisic acid (ABA) signaling pathway that modulates many aspects of plant physiology such as seed germination and response to drought (e.g. stomata opening). In Arabidopsis thaliana (Mouse-ear cress), this protein is Glutamate receptor 1.1 (GLR1.1).